The chain runs to 374 residues: Putative C-&gt;U-editing enzyme APOBEC-4 (374 aa).

One can recognise a CMP/dCMP-type deaminase domain in the interval 60–176 (PQTKHLTFYE…AWNRKALQSL (117 aa)). His-92 contributes to the Zn(2+) binding site. The active-site Proton donor is the Glu-94. Residues Cys-126 and Cys-133 each contribute to the Zn(2+) site. The disordered stretch occupies residues 259–280 (EKHPLGSAAPAQRQPTRGQDPR).

It belongs to the cytidine and deoxycytidylate deaminase family. It depends on Zn(2+) as a cofactor. As to expression, predominantly expressed in testis.

Functionally, putative C to U editing enzyme whose physiological substrate is not yet known. This Mus musculus (Mouse) protein is Putative C-&gt;U-editing enzyme APOBEC-4 (Apobec4).